The chain runs to 303 residues: RELT-like protein 2 (303 aa).

A helical membrane pass occupies residues 15-35 (LYMLFLLVLVFFLMGLVGFMI). Disordered stretches follow at residues 47 to 68 (RTSRGSEPDDAQLQPPEDDDVN), 135 to 214 (CSRS…QPRT), and 249 to 303 (PCTL…AGGM). At Ser52 the chain carries Phosphoserine. Composition is skewed to basic and acidic residues over residues 148–158 (RSKEGKSRPRP) and 172–188 (THIEKRYGLHEHRDGSP). Gly residues predominate over residues 194–212 (GSGGGQEPGGSQAAGGGQP). Residues 274–295 (GLSSQEANGQPTKLDTSGQQES) show a composition bias toward polar residues.

The protein belongs to the RELT family. Interacts with RELT, RELL1, OXSR1, PLSCR1 and TRAF2.

It is found in the cell membrane. Induces activation of MAPK14/p38 cascade, when overexpressed. Induces apoptosis, when overexpressed. In Mus musculus (Mouse), this protein is RELT-like protein 2 (Rell2).